The primary structure comprises 115 residues: Somatostatin-1 (115 aa).

The N-terminal stretch at 1-24 (MLSCRFQCALVLLSLAVVFSKVSA) is a signal peptide. Positions 25–88 (APSDLRLRQL…QDEVRLELDR (64 aa)) are excised as a propeptide. Positions 65 to 95 (NDALDSSDLSRGADQDEVRLELDRSANSSPL) are disordered. A compositionally biased stretch (basic and acidic residues) spans 75–88 (RGADQDEVRLELDR). A disulfide bond links Cys104 and Cys115.

It belongs to the somatostatin family.

Its subcellular location is the secreted. In terms of biological role, somatostatin inhibits the release of somatotropin. The protein is Somatostatin-1 (sst1) of Protopterus annectens (African lungfish).